The primary structure comprises 188 residues: Elongation factor P (188 aa).

This sequence belongs to the elongation factor P family.

It localises to the cytoplasm. It participates in protein biosynthesis; polypeptide chain elongation. Involved in peptide bond synthesis. Stimulates efficient translation and peptide-bond synthesis on native or reconstituted 70S ribosomes in vitro. Probably functions indirectly by altering the affinity of the ribosome for aminoacyl-tRNA, thus increasing their reactivity as acceptors for peptidyl transferase. In Rhodospirillum centenum (strain ATCC 51521 / SW), this protein is Elongation factor P.